A 316-amino-acid polypeptide reads, in one-letter code: MGAVHGVCYGMVGDNLPSRSDVVQLYKSRNIHAMRIYNPDQEALTALRGSGIFLILDVGGVDEVRRLGRDPSYAAGWVRSNVQAYYPDVLIRYIAVGNEVPAGDTGIILLAMQNVHNALASANLSSSIKVSTAVRFDVITNSFPPSSGVFRDPSGLVPIARFLDSTGAPFLANVYPYFAYRDDRGQNIRLNYATLQPGTTVRDNGNGLTYTSLFDAMVDSIYAALEKAGTPNVRVVVSESGWPSAGGFGASVENARNYNQGLIDHIRSGTPKRPGAIETYIFAMFNENRKPGDEVERNFGLFFPNKQPVYPTTFPN.

The Proton donor role is filled by Glu-99. Glu-239 acts as the Nucleophile in catalysis.

Belongs to the glycosyl hydrolase 17 family.

The protein resides in the cytoplasm. The enzyme catalyses Hydrolysis of (1-&gt;3)-beta-D-glucosidic linkages in (1-&gt;3)-beta-D-glucans.. May provide a degree of protection against microbial invasion of germinated barley grain through its ability to degrade fungal cell wall polysaccharides. This chain is Glucan endo-1,3-beta-glucosidase GV, found in Hordeum vulgare (Barley).